A 338-amino-acid polypeptide reads, in one-letter code: Glycerol-3-phosphate dehydrogenase [NAD(P)+] (338 aa).

Residues serine 14, phenylalanine 15, arginine 35, and lysine 109 each coordinate NADPH. Sn-glycerol 3-phosphate is bound by residues lysine 109 and glycine 137. Alanine 141 contributes to the NADPH binding site. Positions 192, 247, 257, 258, and 259 each coordinate sn-glycerol 3-phosphate. Residue lysine 192 is the Proton acceptor of the active site. Arginine 258 is an NADPH binding site. Residues leucine 282 and glutamate 284 each coordinate NADPH.

This sequence belongs to the NAD-dependent glycerol-3-phosphate dehydrogenase family.

It localises to the cytoplasm. It catalyses the reaction sn-glycerol 3-phosphate + NAD(+) = dihydroxyacetone phosphate + NADH + H(+). It carries out the reaction sn-glycerol 3-phosphate + NADP(+) = dihydroxyacetone phosphate + NADPH + H(+). Its pathway is membrane lipid metabolism; glycerophospholipid metabolism. Functionally, catalyzes the reduction of the glycolytic intermediate dihydroxyacetone phosphate (DHAP) to sn-glycerol 3-phosphate (G3P), the key precursor for phospholipid synthesis. The protein is Glycerol-3-phosphate dehydrogenase [NAD(P)+] of Rickettsia rickettsii (strain Iowa).